The primary structure comprises 114 residues: T cell receptor alpha variable 24 (114 aa).

Positions 1-22 (MEKNPLAAPLLILWFHLDCVSS) are cleaved as a signal peptide. The region spanning 23 to 114 (ILNVEQSPQS…EDSATYLCAF (92 aa)) is the Ig-like domain. N-linked (GlcNAc...) asparagine glycosylation is present at Asn-42. Cys-45 and Cys-112 are joined by a disulfide.

In terms of assembly, alpha-beta TR is a heterodimer composed of an alpha and beta chain; disulfide-linked. The alpha-beta TR is associated with the transmembrane signaling CD3 coreceptor proteins to form the TR-CD3 (TcR or TCR). The assembly of alpha-beta TR heterodimers with CD3 occurs in the endoplasmic reticulum where a single alpha-beta TR heterodimer associates with one CD3D-CD3E heterodimer, one CD3G-CD3E heterodimer and one CD247 homodimer forming a stable octameric structure. CD3D-CD3E and CD3G-CD3E heterodimers preferentially associate with TR alpha and TR beta chains, respectively. The association of the CD247 homodimer is the last step of TcR assembly in the endoplasmic reticulum and is required for transport to the cell surface.

The protein resides in the cell membrane. Functionally, v region of the variable domain of T cell receptor (TR) alpha chain that participates in the antigen recognition. Alpha-beta T cell receptors are antigen specific receptors which are essential to the immune response and are present on the cell surface of T lymphocytes. Recognize peptide-major histocompatibility (MH) (pMH) complexes that are displayed by antigen presenting cells (APC), a prerequisite for efficient T cell adaptive immunity against pathogens. Binding of alpha-beta TR to pMH complex initiates TR-CD3 clustering on the cell surface and intracellular activation of LCK that phosphorylates the ITAM motifs of CD3G, CD3D, CD3E and CD247 enabling the recruitment of ZAP70. In turn ZAP70 phosphorylates LAT, which recruits numerous signaling molecules to form the LAT signalosome. The LAT signalosome propagates signal branching to three major signaling pathways, the calcium, the mitogen-activated protein kinase (MAPK) kinase and the nuclear factor NF-kappa-B (NF-kB) pathways, leading to the mobilization of transcription factors that are critical for gene expression and essential for T cell growth and differentiation. The T cell repertoire is generated in the thymus, by V-(D)-J rearrangement. This repertoire is then shaped by intrathymic selection events to generate a peripheral T cell pool of self-MH restricted, non-autoaggressive T cells. Post-thymic interaction of alpha-beta TR with the pMH complexes shapes TR structural and functional avidity. The chain is T cell receptor alpha variable 24 from Homo sapiens (Human).